Reading from the N-terminus, the 968-residue chain is Alanine--tRNA ligase, cytoplasmic (968 aa).

Residues arginine 77, histidine 95, tryptophan 176, and isoleucine 214 to asparagine 216 each bind ATP. L-alanine-binding residues include asparagine 216 and aspartate 239. Residue glycine 243 participates in ATP binding. Zn(2+) contacts are provided by histidine 606, histidine 610, cysteine 724, and histidine 728.

The protein belongs to the class-II aminoacyl-tRNA synthetase family. As to quaternary structure, monomer. Zn(2+) serves as cofactor.

The protein resides in the cytoplasm. It catalyses the reaction tRNA(Ala) + L-alanine + ATP = L-alanyl-tRNA(Ala) + AMP + diphosphate. Functionally, catalyzes the attachment of alanine to tRNA(Ala) in a two-step reaction: alanine is first activated by ATP to form Ala-AMP and then transferred to the acceptor end of tRNA(Ala). Also edits incorrectly charged tRNA(Ala) via its editing domain. The sequence is that of Alanine--tRNA ligase, cytoplasmic from Caenorhabditis elegans.